A 378-amino-acid chain; its full sequence is 1-acyl-sn-glycerol-3-phosphate acyltransferase delta (378 aa).

A helical membrane pass occupies residues 11-31 (FLCHLIFCYVFIVSGLIINTI). The short motif at 96–101 (HKFEID) is the HXXXXD motif element. The next 3 membrane-spanning stretches (helical) occupy residues 125–145 (ELAY…VFCT), 307–327 (TLVN…RFVI), and 338–358 (LASF…MIGV).

The protein belongs to the 1-acyl-sn-glycerol-3-phosphate acyltransferase family.

Its subcellular location is the endoplasmic reticulum membrane. The enzyme catalyses a 1-acyl-sn-glycero-3-phosphate + an acyl-CoA = a 1,2-diacyl-sn-glycero-3-phosphate + CoA. The catalysed reaction is (4Z,7Z,10Z,13Z,16Z,19Z)-docosahexaenoyl-CoA + 1-hexadecanoyl-sn-glycero-3-phosphate = 1-hexadecanoyl-2-(4Z,7Z,10Z,13Z,16Z,19Z-docosahexaenoyl)-sn-glycero-3-phosphate + CoA. It carries out the reaction 1-octadecanoyl-sn-glycero-3-phosphate + (9Z,12Z)-octadecadienoyl-CoA = 1-octadecanoyl-2-(9Z,12Z-octadecadienoyl)-sn-glycero-3-phosphate + CoA. It catalyses the reaction 1-octadecanoyl-sn-glycero-3-phosphate + (4Z,7Z,10Z,13Z,16Z,19Z)-docosahexaenoyl-CoA = 1-octadecanoyl-2-(4Z,7Z,10Z,13Z,16Z,19Z-docosahexaenoyl)-sn-glycero-3-phosphate + CoA. The enzyme catalyses (4Z,7Z,10Z,13Z,16Z,19Z)-docosahexaenoyl-CoA + 1-(9Z-octadecenoyl)-sn-glycero-3-phosphate = 1-(9Z-octadecenoyl)-2-(4Z,7Z,10Z,13Z,16Z,19Z-docosahexaenoyl)-sn-glycero-3-phosphate + CoA. Its pathway is phospholipid metabolism; CDP-diacylglycerol biosynthesis; CDP-diacylglycerol from sn-glycerol 3-phosphate: step 2/3. Its function is as follows. Converts 1-acyl-sn-glycerol-3-phosphate (lysophosphatidic acid or LPA) into 1,2-diacyl-sn-glycerol-3-phosphate (phosphatidic acid or PA) by incorporating an acyl moiety at the sn-2 position of the glycerol backbone. Exhibits high acyl-CoA specificity for polyunsaturated fatty acyl-CoA, especially docosahexaenoyl-CoA (22:6-CoA, DHA-CoA). The protein is 1-acyl-sn-glycerol-3-phosphate acyltransferase delta (AGPAT4) of Bos taurus (Bovine).